Here is a 1719-residue protein sequence, read N- to C-terminus: 5'-3' exoribonuclease 1 (1719 aa).

Residues 1268–1298 (HKSGFTDHSVRHQQRKHDSQRKFKEEYKSPK) show a composition bias toward basic and acidic residues. The tract at residues 1268–1317 (HKSGFTDHSVRHQQRKHDSQRKFKEEYKSPKAECQSQKLSSKQTSGGSAR) is disordered. Residues 1301-1314 (CQSQKLSSKQTSGG) show a composition bias toward polar residues. Ser-1382 bears the Phosphoserine mark. Positions 1397–1430 (ILKIDSPDTRDSKNDMKKSDNEATVSSRRDERGV) are enriched in basic and acidic residues. 2 disordered regions span residues 1397–1445 (ILKI…KPHG) and 1634–1719 (ENKE…KPSE). Residues 1638 to 1660 (AQSSQATPLQTNKPGSSEATKMT) show a composition bias toward polar residues. Residues 1661 to 1680 (PQESPPASSSSSQAAQPVSS) are compositionally biased toward low complexity. The span at 1681 to 1690 (HVETASQGHV) shows a compositional bias: polar residues.

Belongs to the 5'-3' exonuclease family. In terms of assembly, found in a mRNP complex with UPF1, UPF2, UPF3B and XRN1. Associates with alpha and beta tubulins. Interacts with DIS3L2. Interacts with ZC3HAV1 in an RNA-dependent manner. Interacts with ZFP36L1. Interacts with TRIM71 (via NHL repeats) in an RNA-dependent manner. Interacts with YTHDC2 (via ANK repeats). Interacts with DHX34; the interaction is RNA-independent. Expressed in heart, brain (spinal cord, dorsal root and superior cervical ganglia, neurons of the cerebrum and brain stem), peripheral nerve fibers in the skin and intestine, spleen, lung, liver, skeletal muscle, kidney and testis.

The protein localises to the cytoplasm. Functionally, major 5'-3' exoribonuclease involved in mRNA decay. Required for the 5'-3'-processing of the G4 tetraplex-containing DNA and RNA substrates. The kinetic of hydrolysis is faster for G4 RNA tetraplex than for G4 DNA tetraplex and monomeric RNA tetraplex. Binds to RNA and DNA. Plays a role in replication-dependent histone mRNA degradation. The polypeptide is 5'-3' exoribonuclease 1 (Mus musculus (Mouse)).